A 61-amino-acid chain; its full sequence is Myrmicitoxin(1)-Pm5a (61 aa).

Positions 1 to 23 are cleaved as a signal peptide; the sequence is MKAIIFLFAVLTVVAIIIPIISG. Positions 24-33 are excised as a propeptide; that stretch reads EPNAGPLAAS. At Gln60 the chain carries Glutamine amide.

The protein belongs to the formicidae venom clade 2 family. As to expression, expressed by the venom gland.

The protein resides in the secreted. Its function is as follows. Toxin that causes a rapid and irreversible paralysis when intrathoracically injected into insects (blowflies). Does not cause spontaneous nocifensive behaviors by intraplantar injection in mice. This Pogonomyrmex maricopa (Maricopa harvester ant) protein is Myrmicitoxin(1)-Pm5a.